The following is a 283-amino-acid chain: Protein/nucleic acid deglycase HchA (283 aa).

Zn(2+) is bound by residues histidine 86, glutamate 91, and histidine 123. Cysteine 185 functions as the Nucleophile in the catalytic mechanism.

Belongs to the peptidase C56 family. HchA subfamily. In terms of assembly, homodimer.

It is found in the cytoplasm. It carries out the reaction N(omega)-(1-hydroxy-2-oxopropyl)-L-arginyl-[protein] + H2O = lactate + L-arginyl-[protein] + H(+). It catalyses the reaction N(6)-(1-hydroxy-2-oxopropyl)-L-lysyl-[protein] + H2O = lactate + L-lysyl-[protein] + H(+). The catalysed reaction is S-(1-hydroxy-2-oxopropyl)-L-cysteinyl-[protein] + H2O = lactate + L-cysteinyl-[protein] + H(+). The enzyme catalyses N(omega)-(1-hydroxy-2-oxoethyl)-L-arginyl-[protein] + H2O = L-arginyl-[protein] + glycolate + H(+). It carries out the reaction N(6)-(1-hydroxy-2-oxoethyl)-L-lysyl-[protein] + H2O = glycolate + L-lysyl-[protein] + H(+). It catalyses the reaction S-(1-hydroxy-2-oxoethyl)-L-cysteinyl-[protein] + H2O = glycolate + L-cysteinyl-[protein] + H(+). The catalysed reaction is N(2)-(1-hydroxy-2-oxopropyl)-dGTP + H2O = lactate + dGTP + H(+). The enzyme catalyses N(2)-(1-hydroxy-2-oxopropyl)-GTP + H2O = lactate + GTP + H(+). It carries out the reaction N(2)-(1-hydroxy-2-oxopropyl)-GDP + H2O = lactate + GDP + H(+). It catalyses the reaction N(2)-(1-hydroxy-2-oxopropyl)-GMP + H2O = lactate + GMP + H(+). The catalysed reaction is N(2)-(1-hydroxy-2-oxoethyl)-dGTP + H2O = dGTP + glycolate + H(+). The enzyme catalyses N(2)-(1-hydroxy-2-oxoethyl)-GTP + H2O = glycolate + GTP + H(+). It carries out the reaction N(2)-(1-hydroxy-2-oxoethyl)-GDP + H2O = glycolate + GDP + H(+). It catalyses the reaction N(2)-(1-hydroxy-2-oxoethyl)-GMP + H2O = glycolate + GMP + H(+). The catalysed reaction is an N(2)-(1-hydroxy-2-oxopropyl)-guanosine in RNA + H2O = a guanosine in RNA + lactate + H(+). The enzyme catalyses an N(2)-(1-hydroxy-2-oxopropyl)-2'-deoxyguanosine in DNA + H2O = a 2'-deoxyguanosine in DNA + lactate + H(+). It carries out the reaction an N(2)-(1-hydroxy-2-oxoethyl)-guanosine in RNA + H2O = a guanosine in RNA + glycolate + H(+). It catalyses the reaction an N(2)-(1-hydroxy-2-oxoethyl)-2'-deoxyguanosine in DNA + H2O = a 2'-deoxyguanosine in DNA + glycolate + H(+). Functionally, protein and nucleotide deglycase that catalyzes the deglycation of the Maillard adducts formed between amino groups of proteins or nucleotides and reactive carbonyl groups of glyoxals. Thus, functions as a protein deglycase that repairs methylglyoxal- and glyoxal-glycated proteins, and releases repaired proteins and lactate or glycolate, respectively. Deglycates cysteine, arginine and lysine residues in proteins, and thus reactivates these proteins by reversing glycation by glyoxals. Acts on early glycation intermediates (hemithioacetals and aminocarbinols), preventing the formation of Schiff bases and advanced glycation endproducts (AGE). Also functions as a nucleotide deglycase able to repair glycated guanine in the free nucleotide pool (GTP, GDP, GMP, dGTP) and in DNA and RNA. Is thus involved in a major nucleotide repair system named guanine glycation repair (GG repair), dedicated to reversing methylglyoxal and glyoxal damage via nucleotide sanitization and direct nucleic acid repair. Plays an important role in protecting cells from carbonyl stress. The chain is Protein/nucleic acid deglycase HchA from Escherichia coli (strain K12 / MC4100 / BW2952).